Consider the following 617-residue polypeptide: Arrestin domain-containing protein B (617 aa).

Positions 1–109 (MDNRGLRLFI…ATFGQTDKWL (109 aa)) constitute a C2 domain. The Ca(2+) site is built by D20, D27, D76, D78, and D84.

It belongs to the arrestin family. Ca(2+) is required as a cofactor.

The protein is Arrestin domain-containing protein B (adcB) of Dictyostelium discoideum (Social amoeba).